The following is a 149-amino-acid chain: Oocyte-expressed protein (149 aa).

The KH; atypical domain maps to 49-110 (PLVFYLEAWL…RVQNRVKSVL (62 aa)).

The protein belongs to the KHDC1 family. As to quaternary structure, component of the subcortical maternal complex (SCMC), at least composed of NLRP5, KHDC3, OOEP, and TLE6. Within the complex, interacts with NLRP5, KHDC3 and TLE6. As part of the SCMC interacts with the SCMC-associated protein NLRP4F. The SCMC may facilitate translocation of its components between the nuclear and cytoplasmic compartments. Forms a scaffold complex with KHDC3/FILIA, and interacts with BLM and TRIM25 at DNA replication forks.

Its subcellular location is the cytoplasm. The protein localises to the nucleus. Component of the subcortical maternal complex (SCMC), a multiprotein complex that plays a key role in early embryonic development. The SCMC complex is a structural constituent of cytoplasmic lattices, which consist in fibrous structures found in the cytoplasm of oocytes and preimplantation embryos. They are required to store maternal proteins critical for embryonic development, such as proteins that control epigenetic reprogramming of the preimplantation embryo, and prevent their degradation or activation. As part of the OOEP-KHDC3 scaffold, recruits BLM and TRIM25 to DNA replication forks, thereby promoting the ubiquitination of BLM by TRIM25, enhancing BLM retainment at replication forks and therefore promoting stalled replication fork restart. Positively regulates the homologous recombination-mediated DNA double-strand break (DSB) repair pathway by regulating ATM activation and RAD51 recruitment to DSBs in oocytes. Thereby contributes to oocyte survival and the resumption and completion of meiosis. In Canis lupus familiaris (Dog), this protein is Oocyte-expressed protein (OOEP).